The chain runs to 213 residues: Large ribosomal subunit protein uL1 (213 aa).

This sequence belongs to the universal ribosomal protein uL1 family. As to quaternary structure, part of the 50S ribosomal subunit.

In terms of biological role, binds directly to 23S rRNA. Probably involved in E site tRNA release. Its function is as follows. Protein L1 is also a translational repressor protein, it controls the translation of its operon by binding to its mRNA. The chain is Large ribosomal subunit protein uL1 from Methanocella arvoryzae (strain DSM 22066 / NBRC 105507 / MRE50).